Consider the following 755-residue polypeptide: Photosystem I P700 chlorophyll a apoprotein A1 (755 aa).

A run of 8 helical transmembrane segments spans residues 72–95, 158–181, 197–221, 297–315, 352–375, 391–417, 439–461, and 536–554; these read IFSAHFGHLAVVFVWLSGMYYHGA, LLCTAIGGLVMAGLCLFAGWFHYH, LNHHLAGLLGLGSLAWAGHQIHVAI, QAHHHLAIAVLFIVAGHMY, WHAQLAINLAMVGSLSIIVAQHMY, ISLFTHHMWIGGIFIVGGAAHGAIYMV, AIISHLNWVCLFLGFHAFGFYVH, and FMVHHIHAMTIHITVLILL. The [4Fe-4S] cluster site is built by Cys578 and Cys587. The next 2 helical transmembrane spans lie at 594–615 and 669–691; these read HVFLGLFWMYNAISIVIFHFSW and LSAYGLLFLGAHFVWAFSLMFLF. His680 is a chlorophyll a' binding site. The chlorophyll a site is built by Met688 and Tyr696. Phylloquinone is bound at residue Trp697. Residues 729 to 749 traverse the membrane as a helical segment; the sequence is AVGVAHYLLGGIVTTWAFFLA.

The protein belongs to the PsaA/PsaB family. The PsaA/B heterodimer binds the P700 chlorophyll special pair and subsequent electron acceptors. PSI consists of a core antenna complex that captures photons, and an electron transfer chain that converts photonic excitation into a charge separation. The cyanobacterial PSI reaction center is composed of one copy each of PsaA,B,C,D,E,F,I,J,K,L,M and X, and forms trimeric complexes. PSI electron transfer chain: 5 chlorophyll a, 1 chlorophyll a', 2 phylloquinones and 3 4Fe-4S clusters. PSI core antenna: 90 chlorophyll a, 22 carotenoids, 3 phospholipids and 1 galactolipid. P700 is a chlorophyll a/chlorophyll a' dimer, A0 is one or more chlorophyll a, A1 is one or both phylloquinones and FX is a shared 4Fe-4S iron-sulfur center. is required as a cofactor.

It localises to the cellular thylakoid membrane. The catalysed reaction is reduced [plastocyanin] + hnu + oxidized [2Fe-2S]-[ferredoxin] = oxidized [plastocyanin] + reduced [2Fe-2S]-[ferredoxin]. In terms of biological role, psaA and PsaB bind P700, the primary electron donor of photosystem I (PSI), as well as the electron acceptors A0, A1 and FX. PSI is a plastocyanin/cytochrome c6-ferredoxin oxidoreductase, converting photonic excitation into a charge separation, which transfers an electron from the donor P700 chlorophyll pair to the spectroscopically characterized acceptors A0, A1, FX, FA and FB in turn. Oxidized P700 is reduced on the lumenal side of the thylakoid membrane by plastocyanin or cytochrome c6. This is Photosystem I P700 chlorophyll a apoprotein A1 from Synechococcus sp. (strain JA-3-3Ab) (Cyanobacteria bacterium Yellowstone A-Prime).